Reading from the N-terminus, the 1135-residue chain is Potassium channel subfamily T member 2 (1135 aa).

The Cytoplasmic segment spans residues 1–63 (MVDLESEVPP…KNQRSSLRIR (63 aa)). Residues 64–84 (LFNFSLKLLSCLLYIIRVLLE) form a helical membrane-spanning segment. Topologically, residues 85–101 (KPSQGSEWSHIFWVNRS) are extracellular. A helical membrane pass occupies residues 102-122 (LPLWGLQVSVALISLFETILL). Topologically, residues 123 to 137 (GYLSYKGNIWEQILR) are cytoplasmic. The chain crosses the membrane as a helical span at residues 138–158 (IPFILEIINAVPFIISIFWPT). Residues 159-164 (LRNLFV) are Extracellular-facing. Residues 165-185 (PVFLNCWLAKHALENMINDLH) traverse the membrane as a helical segment. The Cytoplasmic segment spans residues 186 to 198 (RAIQRTQSAMFNQ). Residues 199-219 (VLILISTLLCLIFTCICGIQH) traverse the membrane as a helical segment. Residues 220 to 228 (LERIGKKLN) lie on the Extracellular side of the membrane. Positions 229–249 (LFDSLYFCIVTFSTVGFGDVT) form an intramembrane region, pore-forming. Residues 250–256 (PETWSSK) lie on the Extracellular side of the membrane. A helical transmembrane segment spans residues 257 to 277 (LFVVAMICVALVVLPIQFEQL). Residues 278 to 1135 (AYLWMERQKS…VQDSREETQL (858 aa)) lie on the Cytoplasmic side of the membrane. 2 consecutive RCK N-terminal domains span residues 299 to 435 (EKHV…DHVV) and 718 to 858 (NKLI…CYSL). Disordered regions lie at residues 982–1036 (DTKD…AEKI) and 1111–1135 (PNSE…ETQL). Basic residues predominate over residues 1010–1030 (LRRKSMQWARRLSRKGPKHSG). The span at 1111–1122 (PNSEPSRKNSIC) shows a compositional bias: polar residues.

This sequence belongs to the potassium channel family. Calcium-activated (TC 1.A.1.3) subfamily. KCa4.2/KCNT2 sub-subfamily. As to quaternary structure, homotetramer. Forms heteromeric channels with KCNT1. These heterodimer channels differ from the homomers in their unitary conductance, kinetic behavior, subcellular localization, and response to activation of protein kinase C. Phosphorylated by protein kinase C. Phosphorylation of the C-terminal domain inhibits channel activity. In terms of tissue distribution, within the dorsal root ganglia (DRGs), exclusively expressed in small-sized and medium-sized calcitonin gene-related peptide (CGRP)-containing DRG neurons.

The protein localises to the cell membrane. It catalyses the reaction K(+)(in) = K(+)(out). Its activity is regulated as follows. Are normally in a closed state unless activated by an increase in intracellular Na(+) and Cl(-). Inhibited upon stimulation of G-protein coupled receptors, such as CHRM1 and GRM1. There is conflicting data about the effect of ATP on KNCT2 channels activity. Intracellular ATP was initially report to inhibit the channel activity. However, others studies conclude that KNCT2 channels are not inhibited by intracellular ATP. Its function is as follows. Sodium-activated and chloride-activated potassium channel. Produces rapidly activating outward rectifier K(+) currents. Contributes to regulate neuronal excitability. In Mus musculus (Mouse), this protein is Potassium channel subfamily T member 2 (Kcnt2).